Consider the following 366-residue polypeptide: MPTETLQTGSMVKPVSPAGTFTSAVPLRILNKGPDYFRRQAEPNPKRLSAVERLEADKAKYVKSQEVINAKQEPVKPAVLAKPPVCPGAKRVLGSPTLKVFGNHAKTESGVQRETLKLEILKNIINSSEGSSSGSGHKHSSRNWPPHRDTTELHRHSFAESLKVYPTPGRGSPQESSSHVSRRLLEQSAESFLHVSHSSSDIRKVTSVKPLKAIPCSSSAPPLPPKPKVAAMKSPDADQVEPACGVSRRPSLQRSKSDLSDRYFRVDADVERFFNYCGLDPEELENLGMENFARANSDIISLNFRSASMISSDCEQSQDSNSDLRNDDSANDRVPYGISAIERNARIIKWLYSIKQARESQKVSHV.

Disordered stretches follow at residues 127–150 (SSEG…HRDT), 163–182 (KVYP…HVSR), and 214–253 (IPCS…PSLQ). 2 positions are modified to phosphoserine: Ser-234 and Ser-297. Residues 313–333 (DCEQSQDSNSDLRNDDSANDR) are disordered. The segment covering 322-331 (SDLRNDDSAN) has biased composition (basic and acidic residues).

It belongs to the FAM110 family.

It is found in the cytoplasm. Its subcellular location is the cytoskeleton. It localises to the microtubule organizing center. The protein localises to the centrosome. The sequence is that of Protein FAM110B (Fam110b) from Rattus norvegicus (Rat).